Here is a 284-residue protein sequence, read N- to C-terminus: Stomatin (284 aa).

Over 1 to 31 the chain is Cytoplasmic; that stretch reads MSDKRQSSHVQSQRIPESFRENSKTELGACG. Ser18 carries the phosphoserine modification. Cys30 carries the S-palmitoyl cysteine lipid modification. An intramembrane segment occupies 32 to 52; that stretch reads WILVAASFFFVIITFPISIWI. The Cytoplasmic segment spans residues 53-284; that stretch reads CIKIVKEYER…MLQGIMGSNH (232 aa). A lipid anchor (S-palmitoyl cysteine) is attached at Cys87. Phosphoserine occurs at positions 161 and 244. The interval 265 to 273 is required for homooligomerization; it reads STIVFPLPV. A required for lipid raft association region spans residues 267–269; that stretch reads IVF. An interaction with LANCL1 region spans residues 273–284; that stretch reads VDMLQGIMGSNH.

This sequence belongs to the band 7/mec-2 family. As to quaternary structure, interacts with LANCL1. Interacts with SLC2A1. Interacts with SLC4A1; this interaction positively regulates SLC4A1 activity. Identified in large complexes with SLC40A1, SLC14A1, SLC29A1 and AQP1. Homodimer and higher order homooligomers. The homodimer is banana-shaped. Interacts with ASIC1, ASIC2 and ASIC3. Interacts with STOML1; may redistribute STOM from the plasma membrane to late endosomes. As to expression, expressed in all sensory neurons of the dorsal root ganglia. In the CNS, expressed in many neurons of the spinal cord, medulla and pons. Expressed only in scattered neurons in the cortex, hippocampus, thalamus and basal ganglia. In the cerebellum, expressed in all Purkinje cells (at protein level). Widely expressed with high levels in heart, liver, skeletal muscle and testis and low levels in lung, brain and spleen.

Its subcellular location is the cell membrane. It is found in the cytoplasm. The protein localises to the cytoskeleton. It localises to the membrane raft. The protein resides in the melanosome. Its subcellular location is the cytoplasmic vesicle. Functionally, regulates ion channel activity and transmembrane ion transport. Regulates ASIC2 and ASIC3 channel activity. The protein is Stomatin of Mus musculus (Mouse).